The following is a 427-amino-acid chain: Adenylosuccinate synthetase (427 aa).

Residues 12 to 18 (GDEGKGK) and 40 to 42 (GHT) contribute to the GTP site. Asp13 functions as the Proton acceptor in the catalytic mechanism. Mg(2+) is bound by residues Asp13 and Gly40. IMP-binding positions include 13 to 16 (DEGK), 38 to 41 (NAGH), Thr127, Arg141, Gln222, Thr237, and Arg301. His41 acts as the Proton donor in catalysis. 297 to 303 (VVTKRPR) lines the substrate pocket. Residues Arg303, 329–331 (SLD), and 411–413 (AVG) each bind GTP.

This sequence belongs to the adenylosuccinate synthetase family. Homodimer. Mg(2+) serves as cofactor.

The protein resides in the cytoplasm. It carries out the reaction IMP + L-aspartate + GTP = N(6)-(1,2-dicarboxyethyl)-AMP + GDP + phosphate + 2 H(+). The protein operates within purine metabolism; AMP biosynthesis via de novo pathway; AMP from IMP: step 1/2. Functionally, plays an important role in the de novo pathway of purine nucleotide biosynthesis. Catalyzes the first committed step in the biosynthesis of AMP from IMP. This is Adenylosuccinate synthetase from Leuconostoc citreum (strain KM20).